Here is a 153-residue protein sequence, read N- to C-terminus: Ribosome maturation factor RimP (153 aa).

Belongs to the RimP family.

It is found in the cytoplasm. Functionally, required for maturation of 30S ribosomal subunits. The protein is Ribosome maturation factor RimP of Desulforamulus reducens (strain ATCC BAA-1160 / DSM 100696 / MI-1) (Desulfotomaculum reducens).